We begin with the raw amino-acid sequence, 488 residues long: Zinc finger protein 345 (488 aa).

15 consecutive C2H2-type zinc fingers follow at residues 62–84 (LECK…QRIH), 90–112 (YECK…QRIH), 118–140 (FECK…QRIH), 146–168 (YECK…QIIH), 174–196 (YECK…HRIH), 202–224 (YECI…RRIH), 230–252 (YECK…QRIH), 258–280 (YICN…QRIH), 286–308 (YVCK…QRIH), 314–336 (YECK…QRMH), 342–364 (YECK…HRIH), 370–392 (YECK…QLIH), 398–420 (YECK…QRIH), 426–448 (YECK…QRIH), and 454–476 (YECK…KKSH).

The protein belongs to the krueppel C2H2-type zinc-finger protein family.

It is found in the nucleus. In terms of biological role, may be involved in transcriptional regulation. The polypeptide is Zinc finger protein 345 (ZNF345) (Homo sapiens (Human)).